The primary structure comprises 143 residues: Large ribosomal subunit protein uL13 (143 aa).

The protein belongs to the universal ribosomal protein uL13 family. As to quaternary structure, part of the 50S ribosomal subunit.

This protein is one of the early assembly proteins of the 50S ribosomal subunit, although it is not seen to bind rRNA by itself. It is important during the early stages of 50S assembly. The protein is Large ribosomal subunit protein uL13 of Chloroflexus aggregans (strain MD-66 / DSM 9485).